The sequence spans 263 residues: Adaptin ear-binding coat-associated protein 2 (263 aa).

Disordered stretches follow at residues 167 to 191 (KKEGAAGAPRTRPASAGGLSLLPPP) and 209 to 263 (GGSL…WVQF). S181 is modified (phosphoserine). Short sequence motifs (WXXF motif) lie at residues 218 to 221 (GSGG) and 238 to 241 (DIWG). Positions 246–263 (STGSPSSQSQPGTGWVQF) are enriched in low complexity.

It belongs to the NECAP family. Interacts with AP1G1 and AP2A1 components of the adapter protein complexes AP-1 and AP-2. Interacts with the GAE domain proteins GGA1, GGA2 and GGA3. As to expression, expressed in brain, heart, kidney, liver and lung (at protein level).

The protein localises to the cytoplasmic vesicle. Its subcellular location is the clathrin-coated vesicle membrane. The protein resides in the cell membrane. Functionally, involved in endocytosis. This is Adaptin ear-binding coat-associated protein 2 (Necap2) from Rattus norvegicus (Rat).